Here is a 692-residue protein sequence, read N- to C-terminus: Ino eighty subunit 1 (692 aa).

A compositionally biased stretch (basic and acidic residues) spans 1-25 (MGKRVYDPIHDTFQLREDNSDETKA). The interval 1-133 (MGKRVYDPIH…RHLKKPDGEP (133 aa)) is disordered. A Phosphoserine modification is found at serine 27. Over residues 28–56 (PMQSVKSGSQEEASPSSIQSETETVTTKS) the composition is skewed to polar residues. Residues 64-80 (EIDDKNDDDSTQSEEEN) are compositionally biased toward acidic residues. Residues 97 to 109 (GASTATGPVTTNT) are compositionally biased toward polar residues. Residues 340–385 (SKYVEVESKAQEQDMVDEQNEVKETEAENEKQESKAAYATTLFDIL) are a coiled coil. The span at 465–485 (FMSKMEEGRKRERTNVTEVKK) shows a compositional bias: basic and acidic residues. The interval 465–550 (FMSKMEEGRK…VTPAAPTETE (86 aa)) is disordered. Residues serine 487, serine 493, and serine 504 each carry the phosphoserine modification. Over residues 493–504 (SEEDGEGEDDKS) the composition is skewed to acidic residues. Threonine 507 is modified (phosphothreonine). The segment covering 513–528 (SLLTPTPILESSSPMT) has biased composition (polar residues).

As to quaternary structure, component of the chromatin-remodeling INO80 complex, at least composed of ARP4, ARP5, ARP8, RVB1, RVB2, TAF14, NHP10, IES1, IES3, IES4, IES6, ACT1, IES2, IES5 and INO80.

It localises to the nucleus. Functionally, probably involved in transcription regulation via its interaction with the INO80 complex, a chromatin-remodeling complex. The polypeptide is Ino eighty subunit 1 (IES1) (Saccharomyces cerevisiae (strain ATCC 204508 / S288c) (Baker's yeast)).